We begin with the raw amino-acid sequence, 349 residues long: Secretory carrier-associated membrane protein 3 (349 aa).

Residues 1–90 (MAQSRDTGNP…EPRNYGSYST (90 aa)) form a disordered region. Over 1 to 168 (MAQSRDTGNP…PQEFQKTVST (168 aa)) the chain is Cytoplasmic. Position 32 is a phosphoserine (S32). T37 is subject to Phosphothreonine. Phosphotyrosine occurs at positions 41 and 53. Residues 49–68 (PPPAYEPPAPAPAPLPPPSA) show a composition bias toward pro residues. 2 positions are modified to phosphoserine: S74 and S78. Position 85 is a phosphotyrosine (Y85). Position 87 is a phosphoserine (S87). 4 helical membrane passes run 169 to 189 (MYYLWMCSTLALLLNFFACLA), 200 to 220 (GFGLSMLWLLLFTPCSFVCWY), 236 to 256 (FVFFFIFFVQDVFFVLQAIGI), and 277 to 297 (VAVLMLLVALLFTGIAVLGIV). The Cytoplasmic segment spans residues 298–349 (MLKRIHSLYRQTGASFQKAQQEFAAGVFSNPAVRTAAANAAAGAAENAFRAP). A Glycyl lysine isopeptide (Lys-Gly) (interchain with G-Cter in SUMO1) cross-link involves residue K315.

Belongs to the SCAMP family. Interacts with NEDD4 and NEDD4L and TSG101. Interacts with RNF126. In terms of processing, monoubiquitinated.

The protein resides in the membrane. Functionally, functions in post-Golgi recycling pathways. Acts as a recycling carrier to the cell surface. This Mus musculus (Mouse) protein is Secretory carrier-associated membrane protein 3 (Scamp3).